The primary structure comprises 727 residues: Elongation factor 2 (727 aa).

The tr-type G domain occupies 19–260 (DQIRNMGICA…MAIKHLPNPL (242 aa)). Residues 28 to 35 (AHIDHGKT), 94 to 98 (DTPGH), and 148 to 151 (NKVD) each bind GTP. H603 is modified (diphthamide).

This sequence belongs to the TRAFAC class translation factor GTPase superfamily. Classic translation factor GTPase family. EF-G/EF-2 subfamily.

The protein resides in the cytoplasm. Functionally, catalyzes the GTP-dependent ribosomal translocation step during translation elongation. During this step, the ribosome changes from the pre-translocational (PRE) to the post-translocational (POST) state as the newly formed A-site-bound peptidyl-tRNA and P-site-bound deacylated tRNA move to the P and E sites, respectively. Catalyzes the coordinated movement of the two tRNA molecules, the mRNA and conformational changes in the ribosome. The polypeptide is Elongation factor 2 (fusA) (Methanococcus vannielii (strain ATCC 35089 / DSM 1224 / JCM 13029 / OCM 148 / SB)).